Reading from the N-terminus, the 877-residue chain is Valine--tRNA ligase (877 aa).

The 'HIGH' region motif lies at 46 to 56 (PYPTGSIHMGH). The 'KMSKS' region signature appears at 529-533 (KMSKS). Lys532 contacts ATP.

This sequence belongs to the class-I aminoacyl-tRNA synthetase family. ValS type 2 subfamily.

The protein resides in the cytoplasm. The catalysed reaction is tRNA(Val) + L-valine + ATP = L-valyl-tRNA(Val) + AMP + diphosphate. Functionally, catalyzes the attachment of valine to tRNA(Val). As ValRS can inadvertently accommodate and process structurally similar amino acids such as threonine, to avoid such errors, it has a 'posttransfer' editing activity that hydrolyzes mischarged Thr-tRNA(Val) in a tRNA-dependent manner. The polypeptide is Valine--tRNA ligase (Methanothermobacter thermautotrophicus (strain ATCC 29096 / DSM 1053 / JCM 10044 / NBRC 100330 / Delta H) (Methanobacterium thermoautotrophicum)).